The sequence spans 518 residues: MNRRAVLSVSNKTGLVELARGLVELGFDLISTGGTFKTLTEAGLPVRYVTEVTGFPEILDGRVKTLHPRIHGGILARATAEHLQQLEDNGIGLIDLVVVNLYPFKETIARPGVSFQEAIENIDIGGPSMVRAAAKNQERVSIVVNPERYPEVLQALREQGEISYDMRKRLAAEAFAHTAEYDQCIAGYLTAALAEESVSSSSSPFPATITLGGQKAQDLRYGENPAQKAAFYRGADAAGTLAYGEQIQGKELSYNNWMDMDAAWGIVQDFSEPACAIIKHTNPCGTALGKTALEAYEKALAADPVSAFGGIIAFNRTVDAECAASLKAHFYEVIVAHEFSSDARAILQEKKNLRLVKVAQDGKPAHTPWKVRSIQGGFLIQEEDEGTTPISAWEVVSKRQPEPEELRELDFAWRVVKHVKSNAIVLAKAGQTLGVGAGQMNRVGSVKIALEQAGDKAQGAYLASDAFFPFPDSLEEAAKAGVRAVVQPGGSVRDAEVIEAADRLNLIMVFTNRRHFKH.

The MGS-like domain occupies 1–144; the sequence is MNRRAVLSVS…KNQERVSIVV (144 aa).

This sequence belongs to the PurH family.

It carries out the reaction (6R)-10-formyltetrahydrofolate + 5-amino-1-(5-phospho-beta-D-ribosyl)imidazole-4-carboxamide = 5-formamido-1-(5-phospho-D-ribosyl)imidazole-4-carboxamide + (6S)-5,6,7,8-tetrahydrofolate. The catalysed reaction is IMP + H2O = 5-formamido-1-(5-phospho-D-ribosyl)imidazole-4-carboxamide. It functions in the pathway purine metabolism; IMP biosynthesis via de novo pathway; 5-formamido-1-(5-phospho-D-ribosyl)imidazole-4-carboxamide from 5-amino-1-(5-phospho-D-ribosyl)imidazole-4-carboxamide (10-formyl THF route): step 1/1. Its pathway is purine metabolism; IMP biosynthesis via de novo pathway; IMP from 5-formamido-1-(5-phospho-D-ribosyl)imidazole-4-carboxamide: step 1/1. This is Bifunctional purine biosynthesis protein PurH from Desulfitobacterium hafniense (strain DSM 10664 / DCB-2).